Reading from the N-terminus, the 364-residue chain is Aminomethyltransferase (364 aa).

The protein belongs to the GcvT family. The glycine cleavage system is composed of four proteins: P, T, L and H.

The catalysed reaction is N(6)-[(R)-S(8)-aminomethyldihydrolipoyl]-L-lysyl-[protein] + (6S)-5,6,7,8-tetrahydrofolate = N(6)-[(R)-dihydrolipoyl]-L-lysyl-[protein] + (6R)-5,10-methylene-5,6,7,8-tetrahydrofolate + NH4(+). The glycine cleavage system catalyzes the degradation of glycine. In Shewanella pealeana (strain ATCC 700345 / ANG-SQ1), this protein is Aminomethyltransferase.